The sequence spans 151 residues: 3-hydroxyacyl-[acyl-carrier-protein] dehydratase FabZ (151 aa).

His54 is a catalytic residue.

Belongs to the thioester dehydratase family. FabZ subfamily.

It is found in the cytoplasm. The enzyme catalyses a (3R)-hydroxyacyl-[ACP] = a (2E)-enoyl-[ACP] + H2O. Its function is as follows. Involved in unsaturated fatty acids biosynthesis. Catalyzes the dehydration of short chain beta-hydroxyacyl-ACPs and long chain saturated and unsaturated beta-hydroxyacyl-ACPs. The polypeptide is 3-hydroxyacyl-[acyl-carrier-protein] dehydratase FabZ (Buchnera aphidicola subsp. Acyrthosiphon pisum (strain 5A)).